A 656-amino-acid polypeptide reads, in one-letter code: Bifunctional protein ThiO/ThiG (656 aa).

The thiO stretch occupies residues 1-395; sequence MQTTSDVLII…HAAENSEGSK (395 aa). FAD contacts are provided by residues 7-21 and 48-50; these read VLII…AIAV and AGM. E56 contributes to the glycine binding site. FAD is bound at residue V169. 2 residues coordinate glycine: R298 and R324. 322–328 is a binding site for FAD; the sequence is HYRNGIL. A thiG region spans residues 396-656; it reads DLLEIAGRKF…ASSPLTGLVG (261 aa). The Schiff-base intermediate with DXP role is filled by K498. 1-deoxy-D-xylulose 5-phosphate is bound by residues G559, 585 to 586, and 607 to 608; these read AG and NS.

This sequence in the N-terminal section; belongs to the DAO family. ThiO subfamily. It in the C-terminal section; belongs to the ThiG family. Interacts with ThiH and ThiS. It depends on FAD as a cofactor.

The protein resides in the cytoplasm. The catalysed reaction is glycine + O2 + H2O = glyoxylate + H2O2 + NH4(+). It catalyses the reaction [ThiS sulfur-carrier protein]-C-terminal-Gly-aminoethanethioate + 2-iminoacetate + 1-deoxy-D-xylulose 5-phosphate = [ThiS sulfur-carrier protein]-C-terminal Gly-Gly + 2-[(2R,5Z)-2-carboxy-4-methylthiazol-5(2H)-ylidene]ethyl phosphate + 2 H2O + H(+). Its pathway is cofactor biosynthesis; thiamine diphosphate biosynthesis. Functionally, catalyzes the FAD-dependent oxidative deamination of glycine. Is essential for thiamine biosynthesis since the oxidation of glycine catalyzed by ThiO generates the glycine imine intermediate (dehydroglycine) required for the biosynthesis of the thiazole ring of thiamine pyrophosphate. Catalyzes the rearrangement of 1-deoxy-D-xylulose 5-phosphate (DXP) to produce the thiazole phosphate moiety of thiamine. Sulfur is provided by the thiocarboxylate moiety of the carrier protein ThiS. In vitro, sulfur can be provided by H(2)S. The sequence is that of Bifunctional protein ThiO/ThiG (thiO/thiG) from Synechocystis sp. (strain ATCC 27184 / PCC 6803 / Kazusa).